A 434-amino-acid chain; its full sequence is UDP-glucose 6-dehydrogenase (434 aa).

Residues 2–19, valine 11, aspartate 30, lysine 35, threonine 121, and glutamate 152 each bind NAD(+); that span reads NITFIGSGYVGLVSGVMM. Substrate-binding positions include 148 to 152, lysine 204, asparagine 208, 249 to 253, and glycine 257; these read EFLRE and FLNAG. Cysteine 260 serves as the catalytic Nucleophile. NAD(+) is bound at residue lysine 263. Lysine 321 serves as a coordination point for substrate. Residue arginine 328 coordinates NAD(+).

Belongs to the UDP-glucose/GDP-mannose dehydrogenase family.

It catalyses the reaction UDP-alpha-D-glucose + 2 NAD(+) + H2O = UDP-alpha-D-glucuronate + 2 NADH + 3 H(+). It functions in the pathway nucleotide-sugar biosynthesis; UDP-alpha-D-glucuronate biosynthesis; UDP-alpha-D-glucuronate from UDP-alpha-D-glucose: step 1/1. In Rickettsia bellii (strain RML369-C), this protein is UDP-glucose 6-dehydrogenase (udg).